We begin with the raw amino-acid sequence, 365 residues long: GTPase Obg (365 aa).

One can recognise an Obg domain in the interval Met-1–Ile-177. Positions Gln-64 to Leu-85 are disordered. The 171-residue stretch at Ala-178–Glu-348 folds into the OBG-type G domain. GTP contacts are provided by residues Gly-184–Ser-191, Phe-209–Lys-213, Asp-231–Gly-234, Asn-300–Asp-303, and Ser-329–Leu-331. Positions 191 and 211 each coordinate Mg(2+).

The protein belongs to the TRAFAC class OBG-HflX-like GTPase superfamily. OBG GTPase family. In terms of assembly, monomer. The cofactor is Mg(2+).

The protein localises to the cytoplasm. Functionally, an essential GTPase which binds GTP, GDP and possibly (p)ppGpp with moderate affinity, with high nucleotide exchange rates and a fairly low GTP hydrolysis rate. Plays a role in control of the cell cycle, stress response, ribosome biogenesis and in those bacteria that undergo differentiation, in morphogenesis control. The polypeptide is GTPase Obg (Methylacidiphilum infernorum (isolate V4) (Methylokorus infernorum (strain V4))).